A 256-amino-acid polypeptide reads, in one-letter code: Follistatin-related protein 3 (256 aa).

The N-terminal stretch at 1–23 (MRSGALWPLLWGALVWTVGSVGA) is a signal peptide. The TB domain occupies 34 to 105 (GVCWLQQGRE…SCDGVECGPG (72 aa)). Disulfide bonds link Cys-36/Cys-59, Cys-46/Cys-90, Cys-60/Cys-93, Cys-97/Cys-108, Cys-102/Cys-117, Cys-119/Cys-151, Cys-123/Cys-144, and Cys-133/Cys-165. Asn-71 is a glycosylation site (N-linked (GlcNAc...) asparagine). Residues 97-117 (CDGVECGPGKACRMLGGRPHC) form the Follistatin-like 1 domain. Kazal-like domains follow at residues 111 to 167 (LGGR…RCQK) and 187 to 243 (SAHC…ICTG). One can recognise a Follistatin-like 2 domain in the interval 168–191 (SCAQVVCPRPQSCLVDQTGSAHCV). Intrachain disulfides connect Cys-193/Cys-227, Cys-198/Cys-220, and Cys-209/Cys-241. Asn-213 carries N-linked (GlcNAc...) asparagine glycosylation.

In terms of assembly, interacts with INHBA and INHBB. Interacts with FN1. Interacts with ADAM12. Interacts with MLLT10; the interaction enhances MLLT10 in vitro transcriptional activity and self-association. Interacts with MSTN. As to expression, abundantly expressed in heart, lung, kidney and testis. Continuously expressed in embryonic heart.

The protein resides in the secreted. Its subcellular location is the nucleus. The secreted form is a binding and antagonizing protein for members of the TGF-beta family, such as activin, BMP2 and MSTN. Inhibits activin A-, activin B-, BMP2- and MSDT-induced cellular signaling; more effective on activin A than on activin B. Involved in bone formation; inhibits osteoclast differentiation. Involved in hematopoiesis; involved in differentiation of hemopoietic progenitor cells, increases hematopoietic cell adhesion to fibronectin and seems to contribute to the adhesion of hematopoietic precursor cells to the bone marrow stroma. The nuclear form is probably involved in transcriptional regulation via interaction with MLLT10. The sequence is that of Follistatin-related protein 3 (Fstl3) from Mus musculus (Mouse).